The primary structure comprises 287 residues: Putative monooxygenase p33MONOX (287 aa).

Residues 50–60 (LAKIEEGDANM) carry the Flavin-containing monooxygenase motif motif. Disordered stretches follow at residues 139 to 179 (KMQS…SQGS) and 245 to 287 (MTED…PTGF). Over residues 152-165 (TSSAQSTPSSTPHS) the composition is skewed to low complexity.

It belongs to the P33MONOX family.

The protein localises to the cytoplasm. Functionally, potential NADPH-dependent oxidoreductase. May be involved in the regulation of neuronal survival, differentiation and axonal outgrowth. This chain is Putative monooxygenase p33MONOX (P33MONOX), found in Gallus gallus (Chicken).